Consider the following 324-residue polypeptide: Acetyl-coenzyme A carboxylase carboxyl transferase subunit alpha (324 aa).

Positions 44–298 constitute a CoA carboxyltransferase C-terminal domain; that stretch reads QLERRAEELR…KQTLIDTIDE (255 aa).

The protein belongs to the AccA family. Acetyl-CoA carboxylase is a heterohexamer composed of biotin carboxyl carrier protein (AccB), biotin carboxylase (AccC) and two subunits each of ACCase subunit alpha (AccA) and ACCase subunit beta (AccD).

The protein localises to the cytoplasm. It catalyses the reaction N(6)-carboxybiotinyl-L-lysyl-[protein] + acetyl-CoA = N(6)-biotinyl-L-lysyl-[protein] + malonyl-CoA. It participates in lipid metabolism; malonyl-CoA biosynthesis; malonyl-CoA from acetyl-CoA: step 1/1. Functionally, component of the acetyl coenzyme A carboxylase (ACC) complex. First, biotin carboxylase catalyzes the carboxylation of biotin on its carrier protein (BCCP) and then the CO(2) group is transferred by the carboxyltransferase to acetyl-CoA to form malonyl-CoA. The chain is Acetyl-coenzyme A carboxylase carboxyl transferase subunit alpha from Rippkaea orientalis (strain PCC 8801 / RF-1) (Cyanothece sp. (strain PCC 8801)).